A 1781-amino-acid chain; its full sequence is Signal-induced proliferation-associated 1-like protein 3 (1781 aa).

2 disordered regions span residues 45-166 and 239-332; these read SMSQ…FLPL and TELL…EASR. Over residues 54-73 the composition is skewed to low complexity; the sequence is PATATATATATTRPSPTTPA. Residues 87 to 97 show a composition bias toward basic and acidic residues; sequence PPKREALREHS. Ser-100 is subject to Phosphoserine. Over residues 118 to 135 the composition is skewed to polar residues; sequence RSIQNGQPPTSTPASSGS. The span at 137–146 shows a compositional bias: basic residues; sequence AFHRLSRRRS. Ser-146 carries the post-translational modification Phosphoserine. Ser-401 is subject to Phosphoserine. A Rap-GAP domain is found at 611-828; that stretch reads LLKLDEQGLC…RTRQEYLKDL (218 aa). The 77-residue stretch at 966–1042 folds into the PDZ domain; sequence DMTLRRNGLG…VKVVIIPPFE (77 aa). Disordered stretches follow at residues 1046–1112, 1124–1221, 1236–1565, and 1583–1636; these read PRRG…SLSR, ESQP…QKPE, AGSS…GLEP, and TLPA…RLDP. 2 stretches are compositionally biased toward polar residues: residues 1080–1111 and 1157–1166; these read APWQ…QSLS and PSGSFSTPGS. Residues 1196–1210 are compositionally biased toward low complexity; the sequence is DGTSSGDSSSGGLTS. A compositionally biased stretch (basic and acidic residues) spans 1245–1261; it reads SRQDAAGKDSPNRHSKG. A compositionally biased stretch (low complexity) spans 1266 to 1281; the sequence is SSHSSSNTLSSNASSS. Over residues 1304 to 1322 the composition is skewed to polar residues; the sequence is GGSSDSGIDTTLYTSSPSC. The residue at position 1364 (Ser-1364) is a Phosphoserine. At Thr-1387 the chain carries Phosphothreonine. The segment covering 1425-1441 has biased composition (polar residues); sequence RPSQLAQPSPFQLSASV. Residue Lys-1448 is modified to N6-acetyllysine. Residues 1509–1518 are compositionally biased toward basic and acidic residues; the sequence is TIEDDLKKLI. Over residues 1532-1547 the composition is skewed to polar residues; that stretch reads GQSPQKGLQRTLSDES. Ser-1544 and Ser-1547 each carry phosphoserine. A compositionally biased stretch (low complexity) spans 1599–1609; the sequence is PGATPAAGSGF. Residues Ser-1619 and Ser-1622 each carry the phosphoserine modification. Residues 1625–1635 are compositionally biased toward basic and acidic residues; sequence DGRDRPLRRLD. Residue Ser-1677 is modified to Phosphoserine. The disordered stretch occupies residues 1685–1712; sequence SPVHSHLSLERGPPTPRTTPTMSEEPPL. Residues Thr-1699 and Thr-1703 each carry the phosphothreonine modification. Positions 1720–1774 form a coiled coil; sequence QLEVMLKQLHTDLQKEKQDKVVLQSEVASLRQNNQRLQEESQAASEQLRKFAEIF.

The protein resides in the apical cell membrane. Its function is as follows. Plays a critical role in epithelial cell morphogenesis, polarity, adhesion and cytoskeletal organization in the lens. The protein is Signal-induced proliferation-associated 1-like protein 3 (SIPA1L3) of Homo sapiens (Human).